An 81-amino-acid polypeptide reads, in one-letter code: Cytochrome b559 subunit alpha (81 aa).

A helical membrane pass occupies residues 21–35 (VIHSITIPMLFIAGW). H23 provides a ligand contact to heme.

Belongs to the PsbE/PsbF family. In terms of assembly, heterodimer of an alpha subunit and a beta subunit. PSII is composed of 1 copy each of membrane proteins PsbA, PsbB, PsbC, PsbD, PsbE, PsbF, PsbH, PsbI, PsbJ, PsbK, PsbL, PsbM, PsbT, PsbX, PsbY, PsbZ, Psb30/Ycf12, peripheral proteins PsbO, CyanoQ (PsbQ), PsbU, PsbV and a large number of cofactors. It forms dimeric complexes. Requires heme b as cofactor.

It is found in the cellular thylakoid membrane. Functionally, this b-type cytochrome is tightly associated with the reaction center of photosystem II (PSII). PSII is a light-driven water:plastoquinone oxidoreductase that uses light energy to abstract electrons from H(2)O, generating O(2) and a proton gradient subsequently used for ATP formation. It consists of a core antenna complex that captures photons, and an electron transfer chain that converts photonic excitation into a charge separation. The chain is Cytochrome b559 subunit alpha from Crocosphaera subtropica (strain ATCC 51142 / BH68) (Cyanothece sp. (strain ATCC 51142)).